Here is a 544-residue protein sequence, read N- to C-terminus: Lysophosphatidylcholine acyltransferase 2 (544 aa).

Over methionine 1–methionine 58 the chain is Cytoplasmic. The chain crosses the membrane as a helical; Signal-anchor for type II membrane protein span at residues phenylalanine 59–leucine 79. Residues alanine 80 to aspartate 544 lie on the Lumenal side of the membrane. The HXXXXD motif signature appears at histidine 146–aspartate 151. The EGTC motif signature appears at glutamate 220–cysteine 223. EF-hand domains follow at residues proline 391–proline 426 and asparagine 428–valine 463. Aspartate 404, asparagine 406, aspartate 408, serine 410, glutamate 415, aspartate 441, aspartate 443, aspartate 445, tyrosine 447, and glutamate 452 together coordinate Ca(2+). Residues threonine 520–glutamate 532 are compositionally biased toward polar residues. Residues threonine 520–aspartate 544 are disordered.

Belongs to the 1-acyl-sn-glycerol-3-phosphate acyltransferase family. Highest expression is found in resident macrophages and casein-induced neutrophils followed by skin, colon, spleen and thioglycollate-induced macrophages. Detected in erythroleukemic cells but not in reticulocytes.

The protein resides in the endoplasmic reticulum membrane. It is found in the golgi apparatus membrane. It localises to the cell membrane. The protein localises to the lipid droplet. The enzyme catalyses a 1-acyl-sn-glycero-3-phosphocholine + an acyl-CoA = a 1,2-diacyl-sn-glycero-3-phosphocholine + CoA. The catalysed reaction is a 1-O-alkyl-sn-glycero-3-phosphocholine + acetyl-CoA = a 1-O-alkyl-2-acetyl-sn-glycero-3-phosphocholine + CoA. It catalyses the reaction a 1-acyl-sn-glycero-3-phosphate + an acyl-CoA = a 1,2-diacyl-sn-glycero-3-phosphate + CoA. It carries out the reaction a 1-O-(1Z-alkenyl)-sn-glycero-3-phosphocholine + an acyl-CoA = a 1-O-(1Z-alkenyl)-2-acyl-sn-glycero-3-phosphocholine + CoA. The enzyme catalyses 1-O-octadecyl-sn-glycero-3-phosphocholine + acetyl-CoA = 1-O-octadecyl-2-acetyl-sn-glycero-3-phosphocholine + CoA. The catalysed reaction is 1-hexadecanoyl-sn-glycero-3-phosphocholine + acetyl-CoA = 1-hexadecanoyl-2-acetyl-sn-glycero-3-phosphocholine + CoA. It catalyses the reaction 1-octadecanoyl-sn-glycero-3-phosphocholine + acetyl-CoA = 1-octadecanoyl-2-acetyl-sn-glycero-3-phosphocholine + CoA. It carries out the reaction a 1-O-(1Z-alkenyl)-sn-glycero-3-phosphocholine + acetyl-CoA = 1-O-(1Z)-alkenyl-2-acetyl-sn-glycero-3-phosphocholine + CoA. The enzyme catalyses 1-O-hexadecyl-sn-glycero-3-phosphocholine + acetyl-CoA = 1-O-hexadecyl-2-acetyl-sn-glycero-3-phosphocholine + CoA. The catalysed reaction is 1-O-octadecyl-sn-glycero-3-phosphocholine + (5Z,8Z,11Z,14Z)-eicosatetraenoyl-CoA = 1-O-octadecyl-2-(5Z,8Z,11Z,14Z)-eicosatetraenoyl-sn-glycero-3-phosphocholine + CoA. It catalyses the reaction 1-hexadecanoyl-sn-glycero-3-phosphate + (9Z)-octadecenoyl-CoA = 1-hexadecanoyl-2-(9Z-octadecenoyl)-sn-glycero-3-phosphate + CoA. It carries out the reaction 1-(9Z-octadecenoyl)-sn-glycero-3-phosphate + (9Z)-octadecenoyl-CoA = 1,2-di-(9Z-octadecenoyl)-sn-glycero-3-phosphate + CoA. The enzyme catalyses 1-(9Z-octadecenoyl)-sn-glycero-3-phosphate + hexadecanoyl-CoA = 1-(9Z)-octadecenoyl-2-hexadecanoyl-sn-glycero-3-phosphate + CoA. The catalysed reaction is 1-heptadecanoyl-sn-glycero-3-phosphate + (9Z)-octadecenoyl-CoA = 1-heptadecanoyl-2-(9Z)-octadecenoyl-sn-glycero-3-phosphate + CoA. It catalyses the reaction 1-octadecanoyl-sn-glycero-3-phosphate + (9Z)-octadecenoyl-CoA = 1-octadecanoyl-2-(9Z-octadecenoyl)-sn-glycero-3-phosphate + CoA. It carries out the reaction heptadecanoyl-CoA + 1-(9Z-octadecenoyl)-sn-glycero-3-phosphate = 1-(9Z)-octadecenoyl-2-heptadecanoyl-sn-glycero-3-phosphate + CoA. The enzyme catalyses 1-(9Z-octadecenoyl)-sn-glycero-3-phosphate + (9Z,12Z)-octadecadienoyl-CoA = 1-(9Z)-octadecenoyl-2-(9Z,12Z)-octadecadienoyl-sn-glycero-3-phosphate + CoA. The catalysed reaction is 1-(9Z-octadecenoyl)-sn-glycero-3-phosphate + tetradecanoyl-CoA = 1-(9Z)-octadecenoyl-2-tetradecanoyl-sn-glycero-3-phosphate + CoA. It catalyses the reaction pentadecanoyl-CoA + 1-(9Z-octadecenoyl)-sn-glycero-3-phosphate = 1-(9Z)-octadecenoyl-2-pentadecanoyl-sn-glycero-3-phosphate + CoA. It carries out the reaction nonadecanoyl-CoA + 1-(9Z-octadecenoyl)-sn-glycero-3-phosphate = 1-(9Z)-octadecenoyl-2-nonadecanoyl-sn-glycero-3-phosphate + CoA. The enzyme catalyses 1-hexadecanoyl-sn-glycero-3-phosphocholine + (9Z)-octadecenoyl-CoA = 1-hexadecanoyl-2-(9Z-octadecenoyl)-sn-glycero-3-phosphocholine + CoA. Its pathway is lipid metabolism; phospholipid metabolism. Its activity is regulated as follows. Acetyltransferase activity is increased following acute inflammatory stimulation by lipopolysaccharide (LPS). Acyltransferase activity is unchanged. Its function is as follows. Exhibits both acyltransferase and acetyltransferase activities. Activity is calcium-dependent. Catalyzes the conversion of lysophosphatidylcholine (1-acyl-sn-glycero-3-phosphocholine or LPC) into phosphatidylcholine (1,2-diacyl-sn-glycero-3-phosphocholine or PC). Catalyzes the conversion 1-acyl-sn-glycerol-3-phosphate (lysophosphatidic acid or LPA) into 1,2-diacyl-sn-glycerol-3-phosphate (phosphatidic acid or PA) by incorporating an acyl moiety at the sn-2 position of the glycerol backbone. Involved in platelet-activating factor (PAF) biosynthesis by catalyzing the conversion of the PAF precursor, 1-O-alkyl-sn-glycero-3-phosphocholine (lyso-PAF) into 1-O-alkyl-2-acetyl-sn-glycero-3-phosphocholine (PAF). Also converts lyso-PAF to 1-O-alkyl-2-acyl-sn-glycero-3-phosphocholine (PC), a major component of cell membranes and a PAF precursor. Under resting conditions, acyltransferase activity is preferred. Upon acute inflammatory stimulus, acetyltransferase activity is enhanced and PAF synthesis increases. Involved in the regulation of lipid droplet number and size. The sequence is that of Lysophosphatidylcholine acyltransferase 2 (Lpcat2) from Mus musculus (Mouse).